The following is a 429-amino-acid chain: Septin-8 (429 aa).

Basic and acidic residues predominate over residues 1-16 (MAATDLERVSNAEPEP). The tract at residues 1-23 (MAATDLERVSNAEPEPRSLSLGG) is disordered. Position 2 is an N-acetylalanine (Ala-2). Ser-10 is subject to Phosphoserine. Residues 41–307 (QGFSFNILCV…ELYRRCKLEE (267 aa)) enclose the Septin-type G domain. Residues 51-58 (GETGIGKS) form a G1 motif region. Residues 51–58 (GETGIGKS), Gly-106, 187–195 (KADTISKSE), Gly-241, and Arg-256 contribute to the GTP site. The tract at residues 103 to 106 (DAVG) is G3 motif. Residues 186–189 (AKAD) form a G4 motif region. The stretch at 320 to 412 (FSLQETYEAK…AAMEALQSQA (93 aa)) forms a coiled coil. Positions 409 to 420 (QSQALHATSQQP) are enriched in polar residues. A disordered region spans residues 409–429 (QSQALHATSQQPLRKDKDKKN).

This sequence belongs to the TRAFAC class TrmE-Era-EngA-EngB-Septin-like GTPase superfamily. Septin GTPase family. Septins polymerize into heterooligomeric protein complexes that form filaments, and can associate with cellular membranes, actin filaments and microtubules. GTPase activity is required for filament formation. Interacts with SEPTIN5. Interacts with CDK14, SEPTIN4 and SEPTIN7. Interacts with VAMP2; the interaction inhibits interaction of VAMP2 with SYP. Interacts with STX1A.

Its subcellular location is the cytoplasm. The protein resides in the cytoskeleton. It is found in the synapse. The protein localises to the cell projection. It localises to the axon. Its subcellular location is the cytoplasmic vesicle. The protein resides in the secretory vesicle. It is found in the synaptic vesicle membrane. The protein localises to the presynapse. Its function is as follows. Filament-forming cytoskeletal GTPase. May play a role in platelet secretion. Seems to participate in the process of SNARE complex formation in synaptic vesicles. The polypeptide is Septin-8 (Mus musculus (Mouse)).